The primary structure comprises 196 residues: Large ribosomal subunit protein eL15 (196 aa).

The tract at residues 159-196 (RAYRGRTSAGQRGRGQQKRGKGTEHTRPSIRANDKRGK) is disordered. The segment covering 179–196 (KGTEHTRPSIRANDKRGK) has biased composition (basic and acidic residues).

It belongs to the eukaryotic ribosomal protein eL15 family.

This chain is Large ribosomal subunit protein eL15, found in Natronomonas pharaonis (strain ATCC 35678 / DSM 2160 / CIP 103997 / JCM 8858 / NBRC 14720 / NCIMB 2260 / Gabara) (Halobacterium pharaonis).